The primary structure comprises 177 residues: Small ribosomal subunit protein uS5 (177 aa).

The S5 DRBM domain occupies Phe-19–Val-82.

It belongs to the universal ribosomal protein uS5 family. As to quaternary structure, part of the 30S ribosomal subunit. Contacts proteins S4 and S8.

Its function is as follows. With S4 and S12 plays an important role in translational accuracy. Functionally, located at the back of the 30S subunit body where it stabilizes the conformation of the head with respect to the body. In Magnetococcus marinus (strain ATCC BAA-1437 / JCM 17883 / MC-1), this protein is Small ribosomal subunit protein uS5.